The chain runs to 143 residues: SsrA-binding protein (143 aa).

The protein belongs to the SmpB family.

The protein resides in the cytoplasm. Its function is as follows. Required for rescue of stalled ribosomes mediated by trans-translation. Binds to transfer-messenger RNA (tmRNA), required for stable association of tmRNA with ribosomes. tmRNA and SmpB together mimic tRNA shape, replacing the anticodon stem-loop with SmpB. tmRNA is encoded by the ssrA gene; the 2 termini fold to resemble tRNA(Ala) and it encodes a 'tag peptide', a short internal open reading frame. During trans-translation Ala-aminoacylated tmRNA acts like a tRNA, entering the A-site of stalled ribosomes, displacing the stalled mRNA. The ribosome then switches to translate the ORF on the tmRNA; the nascent peptide is terminated with the 'tag peptide' encoded by the tmRNA and targeted for degradation. The ribosome is freed to recommence translation, which seems to be the essential function of trans-translation. This chain is SsrA-binding protein, found in Mycoplasmopsis synoviae (strain 53) (Mycoplasma synoviae).